The chain runs to 64 residues: Alpha-toxin Ts5 (64 aa).

Residues lysine 2–cysteine 64 enclose the LCN-type CS-alpha/beta domain. 4 cysteine pairs are disulfide-bonded: cysteine 12/cysteine 64, cysteine 16/cysteine 38, cysteine 24/cysteine 44, and cysteine 28/cysteine 46.

Belongs to the long (4 C-C) scorpion toxin superfamily. Sodium channel inhibitor family. Alpha subfamily. Expressed by the venom gland.

It is found in the secreted. Functionally, alpha toxins bind voltage-independently at site-3 of sodium channels (Nav) and inhibit the inactivation of the activated channels, thereby blocking neuronal transmission. By extending the depolarized period it indirectly affects beta-cell voltage-dependent potassium channels, thus increasing potassium permeability. The polypeptide is Alpha-toxin Ts5 (Tityus serrulatus (Brazilian scorpion)).